A 283-amino-acid chain; its full sequence is Elongation factor Ts (283 aa).

Positions T80–V83 are involved in Mg(2+) ion dislocation from EF-Tu.

The protein belongs to the EF-Ts family.

It localises to the cytoplasm. Its function is as follows. Associates with the EF-Tu.GDP complex and induces the exchange of GDP to GTP. It remains bound to the aminoacyl-tRNA.EF-Tu.GTP complex up to the GTP hydrolysis stage on the ribosome. This is Elongation factor Ts from Actinobacillus pleuropneumoniae serotype 5b (strain L20).